Reading from the N-terminus, the 319-residue chain is Cobalamin biosynthesis protein CbiB (319 aa).

Transmembrane regions (helical) follow at residues 56–76 (VMWI…LALA), 82–102 (WLGW…RSLA), 153–173 (VDGI…LAMA), 204–224 (VANY…AGLC), and 296–316 (LMWG…CWLS).

Belongs to the CobD/CbiB family.

The protein localises to the cell membrane. It functions in the pathway cofactor biosynthesis; adenosylcobalamin biosynthesis. Converts cobyric acid to cobinamide by the addition of aminopropanol on the F carboxylic group. However, the true cosubstrate could be (R)-1-amino-2-propanol O-2-phosphate, leading to cobinamide phosphate. The chain is Cobalamin biosynthesis protein CbiB from Salmonella arizonae (strain ATCC BAA-731 / CDC346-86 / RSK2980).